The following is a 631-amino-acid chain: MSATKLTRREQRARAQHFIDTLEGTAFPNSKRIYITGTHPGVRVPMREIQLSPTLIGGSKEQPQYEENEAIPVYDTSGPYGDPQIAINVQQGLAKLRQPWIDARGDTEELTVRSSDYTKARLADDGLDELRFSGVLTPKRAKAGRRVTQLHYARQGIITPEMEFIAIRENMGRERIRSEVLRHQHPGMSFGARLPENITAEFVRDEVAAGRAIIPANINHPESEPMIIGRNFLVKVNANIGNSAVTSSIEEEVEKLVWSTRWGADTVMDLSTGRYIHETREWILRNSPVPIGTVPIYQALEKVNGIAEDLTWEAFRDTLLEQAEQGVDYFTIHAGVLLRYVPMTAKRLTGIVSRGGSIMAKWCLSHHQENFLYQHFREICEICAAYDVSLSLGDGLRPGSIQDANDEAQFAELHTLGELTKIAWEYDVQVMIEGPGHVPMQMIRRNMTEELEHCHEAPFYTLGPLTTDIAPGYDHFTSGIGAAMIGWFGCAMLCYVTPKEHLGLPNKEDVKQGLITYKIAAHAADLAKGHPGAQIRDNAMSKARFEFRWEDQFNLALDPFTARAYHDETLPQESGKVAHFCSMCGPKFCSMKISQEVRDYAATQTIEMGMADMSENFRARGGEIYLRKEEA.

Residues N239, M268, Y297, H333, 353–355 (SRG), 394–397 (DGLR), and E433 contribute to the substrate site. H437 is a binding site for Zn(2+). Y460 is a substrate binding site. H501 is a Zn(2+) binding site. [4Fe-4S] cluster is bound by residues C581, C584, and C589.

The protein belongs to the ThiC family. In terms of assembly, homodimer. [4Fe-4S] cluster serves as cofactor.

The catalysed reaction is 5-amino-1-(5-phospho-beta-D-ribosyl)imidazole + S-adenosyl-L-methionine = 4-amino-2-methyl-5-(phosphooxymethyl)pyrimidine + CO + 5'-deoxyadenosine + formate + L-methionine + 3 H(+). Its pathway is cofactor biosynthesis; thiamine diphosphate biosynthesis. Catalyzes the synthesis of the hydroxymethylpyrimidine phosphate (HMP-P) moiety of thiamine from aminoimidazole ribotide (AIR) in a radical S-adenosyl-L-methionine (SAM)-dependent reaction. In Escherichia coli (strain 55989 / EAEC), this protein is Phosphomethylpyrimidine synthase.